The chain runs to 70 residues: MRIYNCSYCGRPIPPGYGIMYVRVDGVVLRFCSRRCFVSMVKMGKNPQKQAWVRKIRRAKSAAQSKSSSK.

The Zn(2+) site is built by C6, C9, C32, and C36. The C4-type zinc-finger motif lies at 6–36 (CSYCGRPIPPGYGIMYVRVDGVVLRFCSRRC).

Belongs to the eukaryotic ribosomal protein eL24 family. As to quaternary structure, part of the 50S ribosomal subunit. Forms a cluster with proteins L3 and L14. Zn(2+) is required as a cofactor.

Binds to the 23S rRNA. The polypeptide is Large ribosomal subunit protein eL24 (Caldivirga maquilingensis (strain ATCC 700844 / DSM 13496 / JCM 10307 / IC-167)).